Consider the following 231-residue polypeptide: Equistatin (231 aa).

Residues 1–32 (MALSQNQAKFSKGFVVMIWVLFIACAITSTEA) form the signal peptide. Thyroglobulin type-1 domains lie at 34-95 (LTKC…SPDC), 102-163 (LTLC…RPTC), and 167-231 (LSEC…RPTC). 9 disulfide bridges follow: C37/C56, C67/C74, C76/C95, C105/C124, C135/C142, C144/C163, C170/C191, C202/C209, and C211/C231.

It belongs to the protease inhibitor I31 family.

The protein localises to the secreted. Its function is as follows. Potent inhibitor of papain-like cysteine proteinases (Ki=0.18-0.57 nM on papain), as well as of the aspartic proteinase cathepsin D (Ki=0.3-05 nM). This is Equistatin from Actinia equina (Beadlet anemone).